Here is a 326-residue protein sequence, read N- to C-terminus: Alkanal monooxygenase beta chain (326 aa).

It belongs to the bacterial luciferase oxidoreductase family. As to quaternary structure, heterodimer of an alpha and a beta chain.

The catalysed reaction is a long-chain fatty aldehyde + FMNH2 + O2 = a long-chain fatty acid + hnu + FMN + H2O + 2 H(+). Functionally, light-emitting reaction in luminous bacteria. The specific role of the beta subunit is unknown, but it is absolutely required for bioluminescence activity. This Photobacterium leiognathi protein is Alkanal monooxygenase beta chain (luxB).